The following is a 337-amino-acid chain: Nucleoid-associated protein PBPRA2585 (337 aa).

It belongs to the YejK family.

Its subcellular location is the cytoplasm. The protein resides in the nucleoid. The sequence is that of Nucleoid-associated protein PBPRA2585 from Photobacterium profundum (strain SS9).